The chain runs to 156 residues: Peptide methionine sulfoxide reductase MsrA (156 aa).

Residue Cys10 is part of the active site.

This sequence belongs to the MsrA Met sulfoxide reductase family.

The enzyme catalyses L-methionyl-[protein] + [thioredoxin]-disulfide + H2O = L-methionyl-(S)-S-oxide-[protein] + [thioredoxin]-dithiol. It carries out the reaction [thioredoxin]-disulfide + L-methionine + H2O = L-methionine (S)-S-oxide + [thioredoxin]-dithiol. Its function is as follows. Has an important function as a repair enzyme for proteins that have been inactivated by oxidation. Catalyzes the reversible oxidation-reduction of methionine sulfoxide in proteins to methionine. The protein is Peptide methionine sulfoxide reductase MsrA of Acidobacterium capsulatum (strain ATCC 51196 / DSM 11244 / BCRC 80197 / JCM 7670 / NBRC 15755 / NCIMB 13165 / 161).